A 199-amino-acid polypeptide reads, in one-letter code: Ribosomal RNA large subunit methyltransferase E (199 aa).

5 residues coordinate S-adenosyl-L-methionine: Gly-53, Trp-55, Asp-73, Asp-92, and Asp-114. Lys-154 functions as the Proton acceptor in the catalytic mechanism.

Belongs to the class I-like SAM-binding methyltransferase superfamily. RNA methyltransferase RlmE family.

Its subcellular location is the cytoplasm. The enzyme catalyses uridine(2552) in 23S rRNA + S-adenosyl-L-methionine = 2'-O-methyluridine(2552) in 23S rRNA + S-adenosyl-L-homocysteine + H(+). Specifically methylates the uridine in position 2552 of 23S rRNA at the 2'-O position of the ribose in the fully assembled 50S ribosomal subunit. This Treponema denticola (strain ATCC 35405 / DSM 14222 / CIP 103919 / JCM 8153 / KCTC 15104) protein is Ribosomal RNA large subunit methyltransferase E.